The sequence spans 920 residues: Glutamate receptor 2.2 (920 aa).

Positions 1 to 24 (MKNSKLFFRFLFLFFFFCLESSRG) are cleaved as a signal peptide. Residues 25–580 (QDNGKTQVNI…DKFSFLKPLS (556 aa)) lie on the Extracellular side of the membrane. Residues N53, N204, N267, N331, N342, N477, and N542 are each glycosylated (N-linked (GlcNAc...) asparagine). Residues 581–601 (IELWLTTLVFFFLVGISVWTL) form a helical membrane-spanning segment. Topologically, residues 602-610 (EHRVNSDFR) are cytoplasmic. The helical transmembrane segment at 611-631 (GPANYQASTIFWFAFSTMVFA) threads the bilayer. The Cytoplasmic segment spans residues 632 to 635 (PRER). A helical membrane pass occupies residues 636-656 (VLSFGARSLVVTWYFVLLVLT). The Extracellular segment spans residues 657 to 830 (QSYTASLASL…VTAIQLGVGS (174 aa)). A glycan (N-linked (GlcNAc...) asparagine) is linked at N702. The chain crosses the membrane as a helical span at residues 831–851 (FWFLFLVVFVVCVLALGKFTF). The Cytoplasmic segment spans residues 852 to 920 (CFLWKTKGKD…QVNQTDPDCL (69 aa)).

Belongs to the glutamate-gated ion channel (TC 1.A.10.1) family. May form heteromers. As to expression, expressed predominantly in roots.

The protein resides in the membrane. Glutamate-gated receptor that probably acts as a non-selective cation channel. May be involved in light-signal transduction and calcium homeostasis via the regulation of calcium influx into cells. The protein is Glutamate receptor 2.2 (GLR2.2) of Arabidopsis thaliana (Mouse-ear cress).